The primary structure comprises 145 residues: MAKKVVATIELMLPAQQASPAPPVGPALGQHGVNIMEFVKQFNAASRDYEPGTILPVVITVYQDRSFTFIMKTPPVSYLLKKAAGVEKGSSDPKRVKVGKITVKQLEEIAKMKMKDMNTRDLKAAMRTVAGTAKSMGIEIEGWKE.

Belongs to the universal ribosomal protein uL11 family. Part of the ribosomal stalk of the 50S ribosomal subunit. Interacts with L10 and the large rRNA to form the base of the stalk. L10 forms an elongated spine to which L12 dimers bind in a sequential fashion forming a multimeric L10(L12)X complex. One or more lysine residues are methylated.

Functionally, forms part of the ribosomal stalk which helps the ribosome interact with GTP-bound translation factors. In Aquifex aeolicus (strain VF5), this protein is Large ribosomal subunit protein uL11.